Reading from the N-terminus, the 275-residue chain is NAD kinase (275 aa).

The active-site Proton acceptor is aspartate 68. Residues 68–69, arginine 73, 136–137, lysine 147, arginine 164, aspartate 166, 177–182, alanine 201, and glutamine 236 each bind NAD(+); these read DG, NE, and TAYAMS.

This sequence belongs to the NAD kinase family. It depends on a divalent metal cation as a cofactor.

The protein resides in the cytoplasm. It carries out the reaction NAD(+) + ATP = ADP + NADP(+) + H(+). Involved in the regulation of the intracellular balance of NAD and NADP, and is a key enzyme in the biosynthesis of NADP. Catalyzes specifically the phosphorylation on 2'-hydroxyl of the adenosine moiety of NAD to yield NADP. The polypeptide is NAD kinase (Methanosarcina acetivorans (strain ATCC 35395 / DSM 2834 / JCM 12185 / C2A)).